The following is a 334-amino-acid chain: UDP-N-acetylglucosamine 4,6-dehydratase (inverting) (334 aa).

Residues 13–16 (TGSF), 37–42 (SRDELK), 61–62 (DV), Ala81, Lys85, and 123–124 (LS) each bind NADP(+). Lys85 contributes to the substrate binding site. Residue Lys127 is part of the active site. Residues Tyr135 and Lys139 each coordinate NADP(+). Position 167 (Asn167) interacts with substrate. 168 to 172 (VVGSR) contributes to the NADP(+) binding site. Residues Val175, Thr193, Arg252, and Glu255 each coordinate substrate.

It belongs to the polysaccharide synthase family. In terms of assembly, homohexamer. NADP(+) is required as a cofactor.

The catalysed reaction is UDP-N-acetyl-alpha-D-glucosamine = UDP-2-acetamido-2,6-dideoxy-beta-L-arabino-hex-4-ulose + H2O. Functionally, catalyzes the first step in the biosynthesis of pseudaminic acid, a sialic-acid-like sugar that is used to modify flagellin. Has both C6 dehydratase and C5 epimerase activities that result in the production of both UDP-2-acetamido-2,6-dideoxy-beta-L-arabino-4-hexulose and UDP-2-acetamido-2,6-dideoxy-alpha-D-xylo-4-hexulose. The polypeptide is UDP-N-acetylglucosamine 4,6-dehydratase (inverting) (pseB) (Campylobacter jejuni subsp. jejuni serotype O:23/36 (strain 81-176)).